Consider the following 311-residue polypeptide: MRNSLYKKNIISISDLNQNELELVLKKSAFLKVKAQPNLLKNKIIASCFFEASTRTRLSFETAVHRLGASIIGFSDGSNISLGKKGETLSDTISVISSYVDAIIIRHPQEGSARLAAQFSNGVPIFNAGDGANQHPTQTLLDLFTIKETQNKLNNLNIAMVGDLKYGRTVHSLTQALAKYKNNQFFFVSPDSLTMPNYINDMLYKKEIHWKRYKNIEEIISEIDILYMTRVQKERLDSTEYASAKSKFVLQTSTLKNARNNLKILHPLPRIDEIDNNVDFTPYAWYFKQAANGIYARQAILSLVLIEKHFE.

Carbamoyl phosphate contacts are provided by R55 and T56. K85 serves as a coordination point for L-aspartate. Positions 106, 135, and 138 each coordinate carbamoyl phosphate. 2 residues coordinate L-aspartate: R168 and R230. Carbamoyl phosphate-binding residues include L268 and P269.

The protein belongs to the aspartate/ornithine carbamoyltransferase superfamily. ATCase family. Heterododecamer (2C3:3R2) of six catalytic PyrB chains organized as two trimers (C3), and six regulatory PyrI chains organized as three dimers (R2).

The catalysed reaction is carbamoyl phosphate + L-aspartate = N-carbamoyl-L-aspartate + phosphate + H(+). Its pathway is pyrimidine metabolism; UMP biosynthesis via de novo pathway; (S)-dihydroorotate from bicarbonate: step 2/3. Catalyzes the condensation of carbamoyl phosphate and aspartate to form carbamoyl aspartate and inorganic phosphate, the committed step in the de novo pyrimidine nucleotide biosynthesis pathway. This Buchnera aphidicola subsp. Schizaphis graminum (strain Sg) protein is Aspartate carbamoyltransferase catalytic subunit.